A 203-amino-acid chain; its full sequence is MARKKVQRKLDGWKSKEWYNIEAPVYLNRAIVGNTMAGDPSLLVGRNVETTVGELTNDMTKNNTKVILRINNVVGDIATTDLMGHELTTDYIRSIVKRQTSRIDANVDVKTKDGYVIRVKPTCFTIKRARSSQMQAIREMMVEIVKKRAAESDFETFMQEAILGRLSAAIYRQAKFIYPLRRVEIRKTEVETIPAAAPAPAAA.

This sequence belongs to the eukaryotic ribosomal protein eS1 family.

The chain is Small ribosomal subunit protein eS1 from Methanosarcina acetivorans (strain ATCC 35395 / DSM 2834 / JCM 12185 / C2A).